The primary structure comprises 423 residues: D-tagatose-1,6-bisphosphate aldolase subunit GatZ (423 aa).

Belongs to the GatZ/KbaZ family. GatZ subfamily. As to quaternary structure, forms a complex with GatY.

Its pathway is carbohydrate metabolism; D-tagatose 6-phosphate degradation; D-glyceraldehyde 3-phosphate and glycerone phosphate from D-tagatose 6-phosphate: step 2/2. Its function is as follows. Component of the tagatose-1,6-bisphosphate aldolase GatYZ that is required for full activity and stability of the Y subunit. Could have a chaperone-like function for the proper and stable folding of GatY. When expressed alone, GatZ does not show any aldolase activity. Is involved in the catabolism of galactitol. The protein is D-tagatose-1,6-bisphosphate aldolase subunit GatZ of Salmonella gallinarum (strain 287/91 / NCTC 13346).